Here is a 341-residue protein sequence, read N- to C-terminus: Ferrochelatase (341 aa).

The Fe cation site is built by histidine 210 and glutamate 291.

The protein belongs to the ferrochelatase family.

It is found in the cytoplasm. The enzyme catalyses heme b + 2 H(+) = protoporphyrin IX + Fe(2+). It functions in the pathway porphyrin-containing compound metabolism; protoheme biosynthesis; protoheme from protoporphyrin-IX: step 1/1. Catalyzes the ferrous insertion into protoporphyrin IX. This chain is Ferrochelatase, found in Alcanivorax borkumensis (strain ATCC 700651 / DSM 11573 / NCIMB 13689 / SK2).